Consider the following 194-residue polypeptide: Pyridoxal 5'-phosphate synthase subunit PdxT (194 aa).

Residue 54–56 participates in L-glutamine binding; sequence GES. Catalysis depends on Cys-83, which acts as the Nucleophile. Residues Arg-110 and 139–140 contribute to the L-glutamine site; that span reads IR. Active-site charge relay system residues include His-175 and Glu-177.

The protein belongs to the glutaminase PdxT/SNO family. In terms of assembly, in the presence of PdxS, forms a dodecamer of heterodimers. Only shows activity in the heterodimer.

The enzyme catalyses aldehydo-D-ribose 5-phosphate + D-glyceraldehyde 3-phosphate + L-glutamine = pyridoxal 5'-phosphate + L-glutamate + phosphate + 3 H2O + H(+). It catalyses the reaction L-glutamine + H2O = L-glutamate + NH4(+). The protein operates within cofactor biosynthesis; pyridoxal 5'-phosphate biosynthesis. Catalyzes the hydrolysis of glutamine to glutamate and ammonia as part of the biosynthesis of pyridoxal 5'-phosphate. The resulting ammonia molecule is channeled to the active site of PdxS. This chain is Pyridoxal 5'-phosphate synthase subunit PdxT, found in Methanoregula boonei (strain DSM 21154 / JCM 14090 / 6A8).